The chain runs to 569 residues: Protein AF-9 (569 aa).

The YEATS domain maps to 1–138 (MASSCAVQVK…EDFRRKLLKA (138 aa)). Positions 138 to 476 (AGGDPNRSIH…PPPPLLKTNN (339 aa)) are disordered. The span at 149 to 190 (SSSSSSSSSSSSSSSSSSSSSSSSSSSSSSSSSSSSSSSSSS) shows a compositional bias: low complexity. Positions 202 to 265 (EHKEKPSKDS…PKPMSKEPKA (64 aa)) are enriched in basic and acidic residues. Residues Ser289 and Ser295 each carry the phosphoserine modification. Residues 296 to 301 (AKKRKK) carry the Nuclear localization signal motif. Residues 304–314 (SEALFKSFSSA) are compositionally biased toward low complexity. Residues 323–350 (ADKKQIKDKSHVKMGKVKIESETSEKKK) show a composition bias toward basic and acidic residues. Lys340 is covalently cross-linked (Glycyl lysine isopeptide (Lys-Gly) (interchain with G-Cter in SUMO2)). A compositionally biased stretch (acidic residues) spans 358 to 369 (DIVDPNDSDVEE). Residues 372–396 (SSKSDSEQPSPASSSSSSSSSFTPS) are compositionally biased toward low complexity. A phosphoserine mark is found at Ser413 and Ser420. Positions 415 to 430 (DNEEESDEAEDNDNDS) are enriched in acidic residues. The segment covering 446–462 (VSLSDGSDSESSSASSP) has biased composition (low complexity). Ser484 carries the phosphoserine modification.

As to quaternary structure, component of the super elongation complex (SEC), at least composed of EAF1, EAF2, CDK9, MLLT3/AF9, AFF (AFF1 or AFF4), the P-TEFb complex and ELL (ELL, ELL2 or ELL3). Interacts with BCOR. Interacts with CBX8. Interacts with ALKBH4. In terms of tissue distribution, ubiquitously expressed. Strong expression in the spleen.

The protein localises to the nucleus. It localises to the chromosome. Functionally, chromatin reader component of the super elongation complex (SEC), a complex required to increase the catalytic rate of RNA polymerase II transcription by suppressing transient pausing by the polymerase at multiple sites along the DNA. Specifically recognizes and binds acylated histone H3, with a preference for histone H3 that is crotonylated. Crotonylation marks active promoters and enhancers and confers resistance to transcriptional repressors. Recognizes and binds histone H3 crotonylated at 'Lys-9' (H3K9cr), and with slightly lower affinity histone H3 crotonylated at 'Lys-18' (H3K18cr). Also recognizes and binds histone H3 acetylated and butyrylated at 'Lys-9' (H3K9ac and H3K9bu, respectively), but with lower affinity than crotonylated histone H3. In the SEC complex, MLLT3 is required to recruit the complex to crotonylated histones. Recruitment of the SEC complex to crotonylated histones promotes recruitment of DOT1L on active chromatin to deposit histone H3 'Lys-79' methylation (H3K79me). Plays a key role in hematopoietic stem cell (HSC) maintenance by preserving, rather than conferring, HSC stemness. Acts by binding to the transcription start site of active genes in HSCs and sustaining level of H3K79me2, probably by recruiting DOT1L. This chain is Protein AF-9 (Mllt3), found in Mus musculus (Mouse).